The sequence spans 498 residues: ATP synthase subunit beta, chloroplastic (498 aa).

Gly-172–Thr-179 provides a ligand contact to ATP.

The protein belongs to the ATPase alpha/beta chains family. In terms of assembly, F-type ATPases have 2 components, CF(1) - the catalytic core - and CF(0) - the membrane proton channel. CF(1) has five subunits: alpha(3), beta(3), gamma(1), delta(1), epsilon(1). CF(0) has four main subunits: a(1), b(1), b'(1) and c(9-12).

The protein resides in the plastid. Its subcellular location is the chloroplast thylakoid membrane. The catalysed reaction is ATP + H2O + 4 H(+)(in) = ADP + phosphate + 5 H(+)(out). In terms of biological role, produces ATP from ADP in the presence of a proton gradient across the membrane. The catalytic sites are hosted primarily by the beta subunits. This Nandina domestica (Heavenly bamboo) protein is ATP synthase subunit beta, chloroplastic.